Reading from the N-terminus, the 466-residue chain is Serine/threonine-protein kinase SSN3 (466 aa).

The Protein kinase domain maps to 32 to 396 (YKILGFISSG…ARDALRHPWF (365 aa)). ATP is bound at residue 38–46 (ISSGTYGRV). A disordered region spans residues 58–105 (ASAKSALPSSTRAALSLPKDKLPSPSFTEDSDPLNNPEMCMRPGDRPA). An ATP-binding site is contributed by Lys114. Residue Asp216 is the Proton acceptor of the active site. A disordered region spans residues 421-466 (THEDNGDAKMGSLPQSMAGGRLPSSSNFRPASGNIVQPAARKKARI).

The protein belongs to the protein kinase superfamily. CMGC Ser/Thr protein kinase family. CDC2/CDKX subfamily. As to quaternary structure, component of the SRB8-11 complex, a regulatory module of the Mediator complex. Mg(2+) serves as cofactor.

The protein localises to the nucleus. The catalysed reaction is L-seryl-[protein] + ATP = O-phospho-L-seryl-[protein] + ADP + H(+). It catalyses the reaction L-threonyl-[protein] + ATP = O-phospho-L-threonyl-[protein] + ADP + H(+). The enzyme catalyses [DNA-directed RNA polymerase] + ATP = phospho-[DNA-directed RNA polymerase] + ADP + H(+). In terms of biological role, component of the SRB8-11 complex. The SRB8-11 complex is a regulatory module of the Mediator complex which is itself involved in regulation of basal and activated RNA polymerase II-dependent transcription. The SRB8-11 complex may be involved in the transcriptional repression of a subset of genes regulated by Mediator. It may inhibit the association of the Mediator complex with RNA polymerase II to form the holoenzyme complex. The SRB8-11 complex phosphorylates the C-terminal domain (CTD) of the largest subunit of RNA polymerase II. The sequence is that of Serine/threonine-protein kinase SSN3 (SSN3) from Cryptococcus neoformans var. neoformans serotype D (strain B-3501A) (Filobasidiella neoformans).